The following is a 349-amino-acid chain: N-acetyl-gamma-glutamyl-phosphate reductase (349 aa).

Cys149 is a catalytic residue.

The protein belongs to the NAGSA dehydrogenase family. Type 1 subfamily.

Its subcellular location is the cytoplasm. It catalyses the reaction N-acetyl-L-glutamate 5-semialdehyde + phosphate + NADP(+) = N-acetyl-L-glutamyl 5-phosphate + NADPH + H(+). Its pathway is amino-acid biosynthesis; L-arginine biosynthesis; N(2)-acetyl-L-ornithine from L-glutamate: step 3/4. Its function is as follows. Catalyzes the NADPH-dependent reduction of N-acetyl-5-glutamyl phosphate to yield N-acetyl-L-glutamate 5-semialdehyde. This Acinetobacter baylyi (strain ATCC 33305 / BD413 / ADP1) protein is N-acetyl-gamma-glutamyl-phosphate reductase.